The sequence spans 246 residues: MAGHSKWANIKHRKAAQDAQRGKIFTKLIRELVTAAKIGGGDVAANPRLRSAVDKALSSNMTRDTINRAIERGVGGGDDTNMETKIYEGYGPGGTAVMVECLSDNANRTISQVRPSFTKCGGNLGTEGSVGYLFSKKGLILIANADEDALTEAAIEAGADDIQAQEDGSFEIYTAWEDLGSVRDGIEAAGFNIQEAEVTMIPSTTVDLDAETAPKLLKLIDMLEDCDDVQNVYHNGEISDEVAALL.

It belongs to the TACO1 family.

Its subcellular location is the cytoplasm. The protein is Probable transcriptional regulatory protein HD_0596 of Haemophilus ducreyi (strain 35000HP / ATCC 700724).